Here is a 223-residue protein sequence, read N- to C-terminus: Serine/threonine/tyrosine-interacting protein B (223 aa).

In terms of domain architecture, Tyrosine-protein phosphatase spans 28–176 (EMQEILPGLF…LQEYEAIYLA (149 aa)).

It belongs to the protein-tyrosine phosphatase family. Non-receptor class subfamily.

Functionally, catalytically inactive phosphatase. In Xenopus laevis (African clawed frog), this protein is Serine/threonine/tyrosine-interacting protein B (styx-b).